We begin with the raw amino-acid sequence, 371 residues long: Histidinol-phosphate aminotransferase (371 aa).

N6-(pyridoxal phosphate)lysine is present on K229.

Belongs to the class-II pyridoxal-phosphate-dependent aminotransferase family. Histidinol-phosphate aminotransferase subfamily. Homodimer. Pyridoxal 5'-phosphate serves as cofactor.

It catalyses the reaction L-histidinol phosphate + 2-oxoglutarate = 3-(imidazol-4-yl)-2-oxopropyl phosphate + L-glutamate. It participates in amino-acid biosynthesis; L-histidine biosynthesis; L-histidine from 5-phospho-alpha-D-ribose 1-diphosphate: step 7/9. In Roseiflexus castenholzii (strain DSM 13941 / HLO8), this protein is Histidinol-phosphate aminotransferase.